The primary structure comprises 711 residues: Ecdysone-inducible protein E75 (711 aa).

A DNA-binding region (nuclear receptor) is located at residues 44–120 (TVLCRVCGDK…VGMSRDAVRF (77 aa)). NR C4-type zinc fingers lie at residues 47 to 67 (CRVC…CEGC) and 84 to 108 (CTKN…LKKC). The NR LBD domain occupies 153 to 400 (DGPRLLARVV…QQMWVEDEGA (248 aa)). 4 disordered regions span residues 405–432 (SGAD…DCGT), 466–530 (LTVT…DMPV), 559–602 (AMRR…PIRA), and 680–711 (DAPQ…MLPA). 2 stretches are compositionally biased toward basic and acidic residues: residues 511 to 521 (SLEEHSDDRRP) and 560 to 572 (MRRD…EARP). Residues 574 to 590 (RPTPSPQPPHHPHPASP) are compositionally biased toward pro residues. Low complexity-rich tracts occupy residues 591–602 (AHPAHSPRPIRA) and 682–692 (PQPLNLSKKSP). Residues 693–711 (SPSPPPPPPRSYMPPMLPA) show a composition bias toward pro residues.

It belongs to the nuclear hormone receptor family. NR1 subfamily.

Its subcellular location is the nucleus. Its function is as follows. Orphan receptor possibly involved in the regulation of genes in the ecdysteroid cascade. In Galleria mellonella (Greater wax moth), this protein is Ecdysone-inducible protein E75 (E75).